Consider the following 237-residue polypeptide: Ankyrin repeat protein 14 (237 aa).

2 ANK repeats span residues 27-56 and 60-90; these read RGET…DVNI and NGYT…TLDC.

Its function is as follows. May be involved in virus-host protein interaction through the ankyrin repeats. The protein is Ankyrin repeat protein 14 of Vaccinia virus (strain Western Reserve) (VACV).